Reading from the N-terminus, the 144-residue chain is MFKEFKTFIMRGNVLDMAVGIIIGAAFGKIVTSFVTDVLTPVLSLGMGKVDFSNLFFVLNGDSYPTLDAAKAAGVATLNYGTFLNVVLDFVIVAFSIFLIIKAANKLKRAEEPAPVTTKECPECCSSIPMKARKCAHCGSAVAS.

The next 2 membrane-spanning stretches (helical) occupy residues 14–34 (VLDMAVGIIIGAAFGKIVTSF) and 81–101 (GTFLNVVLDFVIVAFSIFLII).

The protein belongs to the MscL family. Homopentamer.

The protein resides in the cell inner membrane. Its function is as follows. Channel that opens in response to stretch forces in the membrane lipid bilayer. May participate in the regulation of osmotic pressure changes within the cell. In Bdellovibrio bacteriovorus (strain ATCC 15356 / DSM 50701 / NCIMB 9529 / HD100), this protein is Large-conductance mechanosensitive channel.